Consider the following 625-residue polypeptide: DNA-directed RNA polymerase subunit gamma (625 aa).

Positions 71, 73, 86, and 89 each coordinate Zn(2+). 3 residues coordinate Mg(2+): Asp467, Asp469, and Asp471.

This sequence belongs to the RNA polymerase beta' chain family. RpoC1 subfamily. In cyanobacteria the RNAP catalytic core is composed of 2 alpha, 1 beta, 1 beta', 1 gamma and 1 omega subunit. When a sigma factor is associated with the core the holoenzyme is formed, which can initiate transcription. Mg(2+) is required as a cofactor. The cofactor is Zn(2+).

It carries out the reaction RNA(n) + a ribonucleoside 5'-triphosphate = RNA(n+1) + diphosphate. DNA-dependent RNA polymerase catalyzes the transcription of DNA into RNA using the four ribonucleoside triphosphates as substrates. The protein is DNA-directed RNA polymerase subunit gamma of Trichormus variabilis (strain ATCC 29413 / PCC 7937) (Anabaena variabilis).